The sequence spans 251 residues: Triosephosphate isomerase (251 aa).

A substrate-binding site is contributed by 9–11 (NWK). The active-site Electrophile is His95. The Proton acceptor role is filled by Glu167. Substrate contacts are provided by residues Gly173, Ser213, and 234 to 235 (GG). Ser213 is subject to Phosphoserine.

The protein belongs to the triosephosphate isomerase family. As to quaternary structure, homodimer.

Its subcellular location is the cytoplasm. The catalysed reaction is D-glyceraldehyde 3-phosphate = dihydroxyacetone phosphate. It participates in carbohydrate biosynthesis; gluconeogenesis. It functions in the pathway carbohydrate degradation; glycolysis; D-glyceraldehyde 3-phosphate from glycerone phosphate: step 1/1. Its function is as follows. Involved in the gluconeogenesis. Catalyzes stereospecifically the conversion of dihydroxyacetone phosphate (DHAP) to D-glyceraldehyde-3-phosphate (G3P). This chain is Triosephosphate isomerase, found in Bacillus anthracis.